Reading from the N-terminus, the 151-residue chain is HTH-type transcriptional regulator FL11 (151 aa).

Residues 5–66 (LDDIDKKIIE…VVNPEALGYN (62 aa)) enclose the HTH asnC-type domain. A DNA-binding region (H-T-H motif) is located at residues 24 to 43 (LREISKITGLAESTIHERIK). 98–104 (ETTGDYD) is an L-arginine binding site. Residues asparagine 118, aspartate 122, and 133 to 135 (THT) contribute to the L-lysine site. Residues aspartate 122 and 133–135 (THT) contribute to the L-arginine site.

As to quaternary structure, homodimer. Binds DNA as a dimer and an octamer.

In the famine mode, FL11 forms dimers and acts as a repressor, leading to growth arrest. In the feast mode, in the presence of high concentrations of lysine or arginine, four dimers assemble into an octamer and cover the fl11 and lysine biosynthesis promoters. This leads to the inhibition of fl11 expression and lysine biosynthesis, decrease of the FL11 concentration in the cell, derepression of the target genes and activation of the metabolism. DNA-binding protein involved in the repression of transcription of a large number of genes, thereby arresting growth, in response to environmental changes. This Pyrococcus furiosus (strain ATCC 43587 / DSM 3638 / JCM 8422 / Vc1) protein is HTH-type transcriptional regulator FL11.